The chain runs to 664 residues: E3 ubiquitin-protein ligase CHFR (664 aa).

The tract at residues 1–21 is disordered; it reads MERPEEGKQSPPPQPWGRLLR. In terms of domain architecture, FHA spans 38–89; that stretch reads WTIGRRRGCDLSFPSNKLVSGDHCRIVVDEKSGQVTLEDTSTSGTVINKLKV. Positions 142 to 267 are disordered; the sequence is FHGTKDTSGA…KKMRGDGDLD (126 aa). A compositionally biased stretch (low complexity) spans 186-198; sequence PTASASSTEPSPA. At Ser-244 the chain carries Phosphoserine. Residues 254–264 are compositionally biased toward basic and acidic residues; sequence EPVKKKMRGDG. An RING-type zinc finger spans residues 304-343; it reads CIICQDLLHDCVSLQPCMHTFCAACYSGWMERSSLCPTCR. Thr-386 bears the Phosphothreonine mark. Disordered stretches follow at residues 388 to 417 and 439 to 461; these read DMLQ…VDSE and AQPP…GDAP. Over residues 400 to 417 the composition is skewed to acidic residues; that stretch reads DEEGSSEDLLELSDVDSE. The PBZ-type zinc-finger motif lies at 633–655; that stretch reads PDCYWGRNCRTQVKAHHAMKFNH.

It belongs to the CHFR family. As to quaternary structure, interacts with HDAC1 and HDAC2. Interacts with PML (with sumoylated form of PML). Poly-ADP-ribosylated. In addition to binding non covalently poly(ADP-ribose) via its PBZ-type zinc finger, the protein is also covalently poly-ADP-ribosylated by PARP1. In terms of processing, autoubiquitinated; may regulate its cellular level. Post-translationally, phosphorylated by PKB. Phosphorylation may affect its E3 ligase activity. Ubiquitous.

It localises to the nucleus. It is found in the PML body. It catalyses the reaction S-ubiquitinyl-[E2 ubiquitin-conjugating enzyme]-L-cysteine + [acceptor protein]-L-lysine = [E2 ubiquitin-conjugating enzyme]-L-cysteine + N(6)-ubiquitinyl-[acceptor protein]-L-lysine.. The protein operates within protein modification; protein ubiquitination. Its function is as follows. E3 ubiquitin-protein ligase that functions in the antephase checkpoint by actively delaying passage into mitosis in response to microtubule poisons. Acts in early prophase before chromosome condensation, when the centrosome move apart from each other along the periphery of the nucleus. Probably involved in signaling the presence of mitotic stress caused by microtubule poisons by mediating the 'Lys-48'-linked ubiquitination of target proteins, leading to their degradation by the proteasome. Promotes the ubiquitination and subsequent degradation of AURKA and PLK1. Probably acts as a tumor suppressor, possibly by mediating the polyubiquitination of HDAC1, leading to its degradation. May also promote the formation of 'Lys-63'-linked polyubiquitin chains and functions with the specific ubiquitin-conjugating UBC13-MMS2 (UBE2N-UBE2V2) heterodimer. Substrates that are polyubiquitinated at 'Lys-63' are usually not targeted for degradation, but are rather involved in signaling cellular stress. The polypeptide is E3 ubiquitin-protein ligase CHFR (CHFR) (Homo sapiens (Human)).